Here is a 71-residue protein sequence, read N- to C-terminus: Dermaseptin-PT9 (71 aa).

Positions 1-22 are cleaved as a signal peptide; that stretch reads MAFLKKSLFLVLFLGLVSLSIC. The propeptide occupies 23 to 43; the sequence is EEEKRENEMEQEDDEQSEMKR. Valine amide is present on V68. The propeptide occupies 69–71; it reads GEQ.

It belongs to the frog skin active peptide (FSAP) family. Dermaseptin subfamily. Expressed by the skin glands.

It localises to the secreted. The protein resides in the target cell membrane. In terms of biological role, antimicrobial peptide with activity against fungi, Gram-positive and Gram-negative bacteria. Is active against S.aureus (MIC=16 uM), MRSA (MIC=32 uM), E.faecalis (MIC=16 uM), E.coli (MIC=8 uM), P.aeruginosa (MIC=16 uM), K.pneumoniae (MIC=8 uM), and C.albicans (MIC=64 uM). Also inhibits biofilm formation. Acts by disrupting cell membranes. Also exhibits anti-proliferative effect against various human cancer cells. Shows weak hemolytic activity towards horse erythrocytes. In Phyllomedusa tarsius (Brownbelly leaf frog), this protein is Dermaseptin-PT9.